A 1097-amino-acid polypeptide reads, in one-letter code: Apolipoprotein B receptor (1097 aa).

5 disordered regions span residues 64–249 (QEDL…KGEE), 262–376 (AWGT…WTTS), 410–739 (EEEG…SRRG), 789–866 (GWDS…ARAE), and 889–1097 (VGWQ…PKPQ). 3 stretches are compositionally biased toward basic and acidic residues: residues 83 to 92 (GPGDDRRHEV), 158 to 177 (ERQESHEQEVNREERLRSWE), and 185 to 208 (VRAREPGMARGAESEWTWHGETEG). Positions 209–218 (KAGAVGPKAA) are enriched in low complexity. 2 stretches are compositionally biased toward basic and acidic residues: residues 219-232 (GDNREMEQGVREAD) and 279-302 (GREEARTTPGREEARAILDGEEAR). Low complexity predominate over residues 312–330 (TASGGEEAETASGGEEAGT). A compositionally biased stretch (gly residues) spans 331–362 (ASGGEEAGIASGGEAGTASGGEEAGTASGGEE). Residue Ser458 is modified to Phosphoserine. Basic and acidic residues-rich tracts occupy residues 463–487 (VDLRGKEAEMRQDLGIRADRARMEE) and 496–505 (EERGSSRDPV). The residue at position 510 (Ser510) is a Phosphoserine. Thr572 carries the post-translational modification Phosphothreonine. Phosphoserine is present on Ser594. 2 stretches are compositionally biased toward basic and acidic residues: residues 594-606 (SKEEQERSLEAGP) and 626-637 (NRTRKDMERGNT). The segment covering 640-652 (DAADGEQREEEET) has biased composition (acidic residues). Basic and acidic residues-rich tracts occupy residues 791–800 (DSKEKEEAAA), 892–918 (QEREQREDSEGRCGDYHPEGEAPRLLD), and 928–950 (RRAEAKETEPESLEHVRGQEEQP). Over residues 1000–1017 (SRVHLSRSSSQRRSRPSF) the composition is skewed to basic residues. Positions 1041–1050 (APEQRPLQLE) are enriched in low complexity.

As to quaternary structure, homodimer. In terms of processing, there are 2 forms in macrophages, the membrane-binding proteins 200 kDa (MBP 200) and 235 kDa (MBP 235), that can be reduced into a single active ligand-binding species with intermediate mobility (MBP 200R). In terms of tissue distribution, expressed in peripheral blood leukocytes &gt; bone marrow = spleen &gt; lymph node, and only faintly visible in appendix and thymus. Expressed in the brain, heart, kidney, liver, lung, pancreas, and placenta. Expressed primarily by reticuloendothelial cells: monocytes, macrophages, and endothelial cells. Expressed in atherosclerotic lesion foam cells.

Its subcellular location is the cell membrane. Its function is as follows. Macrophage receptor that binds to the apolipoprotein B48 (APOB) of dietary triglyceride (TG)-rich lipoproteins (TRL) or to a like domain of APOB in hypertriglyceridemic very low density lipoprotein (HTG-VLDL). Binds and internalizes TRL when out of the context of the macrophage. May provide essential lipids to reticuloendothelial cells. Could also be involved in foam cell formation with elevated TRL and remnant lipoprotein (RLP). Mediates the rapid high-affinity uptake of chylomicrons (CM), HTG-VLDL, and trypsinized (tryp) VLDL devoid of APOE in vitro in macrophages. The polypeptide is Apolipoprotein B receptor (Homo sapiens (Human)).